The primary structure comprises 448 residues: Tryptophan dimethylallyltransferase 1 (448 aa).

Residues 80-81 and Glu-89 each bind L-tryptophan; that span reads IL. Positions 100, 186, and 188 each coordinate substrate. 2 residues coordinate L-tryptophan: Tyr-190 and Arg-249. Substrate-binding residues include Arg-262, Lys-264, Tyr-266, Gln-348, Tyr-350, Tyr-414, and Tyr-418.

It belongs to the tryptophan dimethylallyltransferase family. As to quaternary structure, homodimer.

The enzyme catalyses L-tryptophan + dimethylallyl diphosphate = 4-(3-methylbut-2-enyl)-L-tryptophan + diphosphate. The protein operates within alkaloid biosynthesis; ergot alkaloid biosynthesis. Functionally, tryptophan dimethylallyltransferase; part of the gene cluster that mediates the biosynthesis of fungal ergot alkaloid. DmaW catalyzes the first step of ergot alkaloid biosynthesis by condensing dimethylallyl diphosphate (DMAP) and tryptophan to form 4-dimethylallyl-L-tryptophan. The second step is catalyzed by the methyltransferase easF that methylates 4-dimethylallyl-L-tryptophan in the presence of S-adenosyl-L-methionine, resulting in the formation of 4-dimethylallyl-L-abrine. The catalase easC and the FAD-dependent oxidoreductase easE then transform 4-dimethylallyl-L-abrine to chanoclavine-I which is further oxidized by easD in the presence of NAD(+), resulting in the formation of chanoclavine-I aldehyde. Agroclavine dehydrogenase easG then mediates the conversion of chanoclavine-I aldehyde to agroclavine via a non-enzymatic adduct reaction: the substrate is an iminium intermediate that is formed spontaneously from chanoclavine-I aldehyde in the presence of glutathione. The presence of easA is not required to complete this reaction. Further conversion of agroclavine to paspalic acid is a two-step process involving oxidation of agroclavine to elymoclavine and of elymoclavine to paspalic acid, the second step being performed by the elymoclavine oxidase cloA. Paspalic acid is then further converted to D-lysergic acid. Ergopeptines are assembled from D-lysergic acid and three different amino acids by the D-lysergyl-peptide-synthetases composed each of a monomudular and a trimodular nonribosomal peptide synthetase subunit. LpsB and lpsC encode the monomodular subunits responsible for D-lysergic acid activation and incorporation into the ergopeptine backbone. LpsA1 and A2 subunits encode the trimodular nonribosomal peptide synthetase assembling the tripeptide portion of ergopeptines. LpsA1 is responsible for formation of the major ergopeptine, ergotamine, and lpsA2 for alpha-ergocryptine, the minor ergopeptine of the total alkaloid mixture elaborated by C.purpurea. D-lysergyl-tripeptides are assembled by the nonribosomal peptide synthetases and released as N-(D-lysergyl-aminoacyl)-lactams. Cyclolization of the D-lysergyl-tripeptides is performed by the Fe(2+)/2-ketoglutarate-dependent dioxygenase easH which introduces a hydroxyl group into N-(D-lysergyl-aminoacyl)-lactam at alpha-C of the aminoacyl residue followed by spontaneous condensation with the terminal lactam carbonyl group. In Claviceps purpurea (Ergot fungus), this protein is Tryptophan dimethylallyltransferase 1.